Here is a 932-residue protein sequence, read N- to C-terminus: MSDFRIIEEKWQKAWEKDRIFESDPNEKEKFFLTIPYPYLNGNLHAGHTRTFTIGDAFARYMRMKGYNVLFPLGFHVTGTPIIGLAELIAKRDERTIEVYTKYHDVPLEDLLQLTTPEKIVEYFSREALQALKSIGYSIDWRRVFTTTDEEYQRFIEWQYWKLKELGLIVKGTHPVRYCPHDQNPVEDHDLLAGEEATIVEFTVIKFRLEDGDLIFPCATLRPETVFGVTNIWVKPTTYVIAEVDGEKWFVSKEAYEKLTYTEKKVRLLEEVDASQFFGKYVIVPLVNRKVPILPAEFVDTDNATGVVMSVPAHAPFDLAAIEDLKRDEETLAKYGIDKSVVESIKPIVLIKTDIEGVPAEKLIRELGVKSQKDKELLDKATKTLYKKEYHTGIMLDNTMNYAGMKVSEAKERVHEDLVKLGLGDVFYEFSEKPVICRCGTKCVVKVVRDQWFLNYSNREWKEKVLNHLEKMRIIPDYYKEEFRNKIEWLRDKACARRKGLGTRIPWDKEWLIESLSDSTIYMAYYILAKYINAGLLKAENMTPEFLDYVLLGKGEVGKVAEASKLSVELIQQIRDDFEYWYPVDLRSSGKDLVANHLLFYLFHHVAIFPPDKWPRAIAVNGYVSLEGKKMSKSKGPLLTMKRAVQQYGADVTRLYILHAAEYDSDADWKSREVEGLANHLRRFYNLVKENYLKEVGELTTLDRWLVSRMQRAIKEVREAMDNLQTRRAVNAAFFELMNDVRWYLRRGGENLAIILDDWIKLLAPFAPHICEELWHLKHDSYVSLESYPEYDETRVDEEAERIEEYLRNLVEDIQEIKKFVSDAKEVYIAPAEDWKVKAAKVVAESGDVGEAMKQLMQDEELRKLGKEVSNFVKKIFKDRKKLMLVKEWEVLQQNLKFIENETGLKVILDTQRVPEEKRRQAVPGKPAIYVA.

Positions 38 to 48 (PYLNGNLHAGH) match the 'HIGH' region motif. A 'KMSKS' region motif is present at residues 630-634 (KMSKS). Lys633 provides a ligand contact to ATP.

It belongs to the class-I aminoacyl-tRNA synthetase family.

The protein resides in the cytoplasm. It carries out the reaction tRNA(Leu) + L-leucine + ATP = L-leucyl-tRNA(Leu) + AMP + diphosphate. This is Leucine--tRNA ligase from Archaeoglobus fulgidus (strain ATCC 49558 / DSM 4304 / JCM 9628 / NBRC 100126 / VC-16).